A 236-amino-acid chain; its full sequence is MFDSLVDFLKTNIDELNGHEVRISSEFKEHHNEDSKYIIKNWLFSSPEYRKWRITRLDGGKKLQVFNTVAYPNFDCEMPILGADILWFGTSQKLLAILDYQPLIQEGKYLEKYCSSLGIIKKKYSAFDNNKMKNIYDSKKYFSPWVIICRGNKLNLDRDLNNIFHSFVNNYLKIHKSNPVNQFLDTEKIKINQIKYDKYSFEKDPADKLFKSFFGEKWTKKFVNKFLFTLNNEIIY.

Belongs to the HY2 family.

The catalysed reaction is 15,16-dihydrobiliverdin + oxidized 2[4Fe-4S]-[ferredoxin] = biliverdin IXalpha + reduced 2[4Fe-4S]-[ferredoxin] + 2 H(+). Its function is as follows. Catalyzes the two-electron reduction of biliverdin IX-alpha at the C15 methine bridge. The protein is 15,16-dihydrobiliverdin:ferredoxin oxidoreductase of Prochlorococcus marinus (strain MIT 9215).